The following is a 254-amino-acid chain: Type III pantothenate kinase (254 aa).

6–13 (DLGNSAIK) lines the ATP pocket. Substrate contacts are provided by residues Tyr-99 and 106 to 109 (GVDR). Asp-108 acts as the Proton acceptor in catalysis. Asp-128 serves as a coordination point for K(+). Thr-131 contacts ATP. Thr-182 contributes to the substrate binding site.

This sequence belongs to the type III pantothenate kinase family. As to quaternary structure, homodimer. NH4(+) is required as a cofactor. It depends on K(+) as a cofactor.

Its subcellular location is the cytoplasm. The catalysed reaction is (R)-pantothenate + ATP = (R)-4'-phosphopantothenate + ADP + H(+). Its pathway is cofactor biosynthesis; coenzyme A biosynthesis; CoA from (R)-pantothenate: step 1/5. Catalyzes the phosphorylation of pantothenate (Pan), the first step in CoA biosynthesis. The protein is Type III pantothenate kinase of Halorhodospira halophila (strain DSM 244 / SL1) (Ectothiorhodospira halophila (strain DSM 244 / SL1)).